Here is a 217-residue protein sequence, read N- to C-terminus: Thymidylate kinase (217 aa).

11 to 18 (GLEGAGKS) contributes to the ATP binding site.

It belongs to the thymidylate kinase family.

The catalysed reaction is dTMP + ATP = dTDP + ADP. Phosphorylation of dTMP to form dTDP in both de novo and salvage pathways of dTTP synthesis. This Alkalilimnicola ehrlichii (strain ATCC BAA-1101 / DSM 17681 / MLHE-1) protein is Thymidylate kinase.